Reading from the N-terminus, the 227-residue chain is Ferritin light chain (227 aa).

Residues methionine 1 to alanine 19 form the signal peptide. The cysteines at positions 25 and 44 are disulfide-linked. One can recognise a Ferritin-like diiron domain in the interval phenylalanine 48–methionine 208.

Belongs to the ferritin family. As to quaternary structure, oligomer of 12 light (L) chains and 12 heavy (H) chains; L and H chains are disulfide-linked. The functional molecule forms a roughly spherical shell with a diameter of 12 nm and contains a central cavity into which the insoluble ferric iron core is deposited. In terms of tissue distribution, expressed in hemolymph, gut, ovaries and to a lesser extent in testes (at protein level). Expressed in the head (at protein level).

It localises to the golgi apparatus. Its subcellular location is the secreted. In terms of biological role, stores iron in a soluble, non-toxic, readily available form. Important for iron homeostasis. Iron is taken up in the ferrous form and deposited as ferric hydroxides after oxidation. Ferritin is composed of a heavy (H) chain which is responsible for the oxidation and uptake of ferrous iron, and a light (L) chain which facilitates the nucleation of the ferrihydrite iron core. Required for dietary iron absorption in the midgut. Involved in tissue iron detoxification by exporting excess iron. Plays a role in the maintenance of circadian rhythms. Required for embryo and larval development. The sequence is that of Ferritin light chain from Drosophila melanogaster (Fruit fly).